The primary structure comprises 198 residues: Glycerol-3-phosphate acyltransferase 3 (198 aa).

A run of 4 helical transmembrane segments spans residues 4-24 (TYLLFIVAYLLGSIPFALVVG), 71-91 (LPMVFGLDIHPLWFGLAAVLG), 113-133 (LLCYSPVVFAILAVVFFTLLF), and 147-167 (VVAVIASIVTGDKIFIIAMCL).

It belongs to the PlsY family. In terms of assembly, probably interacts with PlsX.

The protein localises to the cell membrane. The enzyme catalyses an acyl phosphate + sn-glycerol 3-phosphate = a 1-acyl-sn-glycero-3-phosphate + phosphate. The protein operates within lipid metabolism; phospholipid metabolism. Catalyzes the transfer of an acyl group from acyl-phosphate (acyl-PO(4)) to glycerol-3-phosphate (G3P) to form lysophosphatidic acid (LPA). This enzyme utilizes acyl-phosphate as fatty acyl donor, but not acyl-CoA or acyl-ACP. This Bacillus anthracis protein is Glycerol-3-phosphate acyltransferase 3.